The chain runs to 534 residues: CTP synthase (534 aa).

Residues 1-267 (MTKYIFVTGG…DQIVCDHLKL (267 aa)) form an amidoligase domain region. CTP is bound at residue Ser13. Ser13 contacts UTP. 14–19 (SIGKGI) provides a ligand contact to ATP. Tyr54 provides a ligand contact to L-glutamine. Asp71 is a binding site for ATP. Positions 71 and 141 each coordinate Mg(2+). CTP-binding positions include 148–150 (DIE), 188–193 (KTKPTQ), and Lys224. UTP contacts are provided by residues 188-193 (KTKPTQ) and Lys224. 240–242 (RDV) lines the ATP pocket. The 243-residue stretch at 292 to 534 (KIALVGKYVE…FVTAAIKNSN (243 aa)) folds into the Glutamine amidotransferase type-1 domain. Gly354 serves as a coordination point for L-glutamine. Cys381 serves as the catalytic Nucleophile; for glutamine hydrolysis. L-glutamine contacts are provided by residues 382 to 385 (LGMQ), Glu405, and Arg463. Residues His508 and Glu510 contribute to the active site.

Belongs to the CTP synthase family. In terms of assembly, homotetramer.

The catalysed reaction is UTP + L-glutamine + ATP + H2O = CTP + L-glutamate + ADP + phosphate + 2 H(+). The enzyme catalyses L-glutamine + H2O = L-glutamate + NH4(+). It catalyses the reaction UTP + NH4(+) + ATP = CTP + ADP + phosphate + 2 H(+). The protein operates within pyrimidine metabolism; CTP biosynthesis via de novo pathway; CTP from UDP: step 2/2. Allosterically activated by GTP, when glutamine is the substrate; GTP has no effect on the reaction when ammonia is the substrate. The allosteric effector GTP functions by stabilizing the protein conformation that binds the tetrahedral intermediate(s) formed during glutamine hydrolysis. Inhibited by the product CTP, via allosteric rather than competitive inhibition. Catalyzes the ATP-dependent amination of UTP to CTP with either L-glutamine or ammonia as the source of nitrogen. Regulates intracellular CTP levels through interactions with the four ribonucleotide triphosphates. This is CTP synthase from Streptococcus pyogenes serotype M2 (strain MGAS10270).